The sequence spans 109 residues: Cyclic di-AMP receptor A (109 aa).

3',3'-c-di-AMP-binding residues include Thr-21, Phe-25, Thr-28, Gly-35, Phe-36, Leu-37, Asn-41, Gly-47, Glu-92, and Gly-94.

Homotrimer.

Its subcellular location is the cytoplasm. Functionally, binds cyclic di-AMP (c-di-AMP) and is probably involved in c-di-AMP-mediated signaling pathways. In vitro, can also bind cyclic GMP-AMP (3'3'-cGAMP), with lower affinity, but not c-di-GMP or 2'3'-cGAMP. The sequence is that of Cyclic di-AMP receptor A from Bacillus subtilis (strain 168).